The chain runs to 396 residues: Ornithine aminotransferase (396 aa).

Position 255 is an N6-(pyridoxal phosphate)lysine (Lys-255).

The protein belongs to the class-III pyridoxal-phosphate-dependent aminotransferase family. OAT subfamily. It depends on pyridoxal 5'-phosphate as a cofactor.

The protein resides in the cytoplasm. It catalyses the reaction a 2-oxocarboxylate + L-ornithine = L-glutamate 5-semialdehyde + an L-alpha-amino acid. It participates in amino-acid biosynthesis; L-proline biosynthesis; L-glutamate 5-semialdehyde from L-ornithine: step 1/1. Functionally, catalyzes the interconversion of ornithine to glutamate semialdehyde. This Staphylococcus carnosus (strain TM300) protein is Ornithine aminotransferase.